Here is a 215-residue protein sequence, read N- to C-terminus: A-type ATP synthase subunit E (215 aa).

This sequence belongs to the V-ATPase E subunit family. As to quaternary structure, has multiple subunits with at least A(3), B(3), C, D, E, F, H, I and proteolipid K(x).

It is found in the cell membrane. Its function is as follows. Component of the A-type ATP synthase that produces ATP from ADP in the presence of a proton gradient across the membrane. The polypeptide is A-type ATP synthase subunit E (Thermofilum pendens (strain DSM 2475 / Hrk 5)).